A 95-amino-acid chain; its full sequence is Protein GOLVEN 9 (95 aa).

An N-terminal signal peptide occupies residues 1 to 24 (MKKTSLKLMTLVLGFCFVIYLLQG). Residues 25–73 (PRGGSRNGDLLIARKLISLEPIETKNAARSLKDSISTDLEEEVDRLMEH) constitute a propeptide that is removed on maturation. The segment at 72–95 (EHEYPSPVKPRKRTPVHNGVRNRH) is disordered. A Sulfotyrosine modification is found at Y75. Residues 80–95 (KPRKRTPVHNGVRNRH) show a composition bias toward basic residues. A Hydroxyproline modification is found at P86. The propeptide occupies 90 to 95 (GVRNRH).

It belongs to the RGF family. In terms of assembly, binds to LRR receptor-like serine/threonine-protein kinases to trigger their dimerization with SERK proteins and subsequent signaling. Expressed in roots.

The protein localises to the secreted. In terms of biological role, signaling peptide (root growth factor) required during root gravitropism in a PIN2-traffic dependent manner. Regulates the pattern of root growth and lateral root development by modulating the length and the number of cortical cells in the root apical meristem (RAM), and the anticlinal asymmetric cell divisions in lateral root initiation cells. The chain is Protein GOLVEN 9 from Arabidopsis thaliana (Mouse-ear cress).